The sequence spans 156 residues: rRNA methyltransferase (156 aa).

Functionally, modifies 16S rRNA so making ribosomes resistant to certain aminoglycosides. This chain is rRNA methyltransferase (kamC), found in Saccharopolyspora hirsuta.